The chain runs to 459 residues: FBD-associated F-box protein At4g13985 (459 aa).

The F-box domain maps to 18–64; that stretch reads VDRLRNLPDCLLFKILLNLPTKDVVKLSVLSRRWRNVWRYVPGLDLE. Residues 375–429 enclose the FBD domain; that stretch reads KEGANILPGPRRFLTSLEYVKIAKPMAAEASEIKLKLVSYFLENSTILKKLTLCL.

The protein is FBD-associated F-box protein At4g13985 of Arabidopsis thaliana (Mouse-ear cress).